Here is a 285-residue protein sequence, read N- to C-terminus: (2Z,6Z)-farnesyl diphosphate synthase CPT6, chloroplastic (285 aa).

The transit peptide at Met-1–Phe-30 directs the protein to the chloroplast. Asp-65 is an active-site residue.

The protein belongs to the UPP synthase family. Mg(2+) serves as cofactor. Expressed in roots and red fruits.

The protein localises to the plastid. Its subcellular location is the chloroplast. The catalysed reaction is 2 isopentenyl diphosphate + dimethylallyl diphosphate = (2Z,6Z)-farnesyl diphosphate + 2 diphosphate. It catalyses the reaction isopentenyl diphosphate + dimethylallyl diphosphate = neryl diphosphate + diphosphate. It carries out the reaction neryl diphosphate + isopentenyl diphosphate = (2Z,6Z)-farnesyl diphosphate + diphosphate. Uses neryl diphosphate to catalyze the cis-prenyl chain elongation and produce the 15 carbon product (2Z,6Z)-farnesyl diphosphate. The polypeptide is (2Z,6Z)-farnesyl diphosphate synthase CPT6, chloroplastic (Solanum lycopersicum (Tomato)).